Reading from the N-terminus, the 255-residue chain is tRNA (guanine-N(7)-)-methyltransferase (255 aa).

The interval 1–35 (MTRTNDASGGGKLPRKRFYRARAHSNPLSDSHFPV) is disordered. The span at 13–23 (LPRKRFYRARA) shows a compositional bias: basic residues. S-adenosyl-L-methionine contacts are provided by residues Gly75, 98–99 (EL), 131–132 (NS), and Leu151. Asp154 is an active-site residue. 229 to 231 (TEE) is an S-adenosyl-L-methionine binding site.

The protein belongs to the class I-like SAM-binding methyltransferase superfamily. TrmB family.

It localises to the nucleus. The catalysed reaction is guanosine(46) in tRNA + S-adenosyl-L-methionine = N(7)-methylguanosine(46) in tRNA + S-adenosyl-L-homocysteine. Its pathway is tRNA modification; N(7)-methylguanine-tRNA biosynthesis. Catalyzes the formation of N(7)-methylguanine at position 46 (m7G46) in tRNA. This Zea mays (Maize) protein is tRNA (guanine-N(7)-)-methyltransferase.